The following is a 1453-amino-acid chain: ABC transporter G family member 34 (1453 aa).

A disordered region spans residues 1–24 (MLGRDEDLVRTMSGRGSLGSTSHR). Residues 173–446 (LGLFHLLPSK…FEYMGFKCPE (274 aa)) enclose the ABC transporter 1 domain. Position 206-213 (206-213 (GPPSSGKT)) interacts with ATP. The region spanning 524 to 737 (DLFKACFDRE…GQTALVINEF (214 aa)) is the ABC transmembrane type-2 1 domain. A run of 6 helical transmembrane segments spans residues 542–562 (FVYV…MTVY), 582–602 (LFFS…FTVM), 621–641 (FALP…VIWI), 661–681 (LLAY…LGAL), 687–707 (IANS…GFII), and 773–793 (FWIC…CYII). The ABC transporter 2 domain maps to 852–1105 (LAFNNVNYYV…LVEYFEAIEG (254 aa)). Residue 897–904 (GVSGAGKT) coordinates ATP. The ABC transmembrane type-2 2 domain maps to 1177–1391 (TQTKACFWKM…TLYGIITSQV (215 aa)). The next 7 helical transmembrane spans lie at 1196–1216 (YNAI…LLFW), 1230–1250 (NFFG…AATV), 1289–1309 (IQTG…WTVV), 1311–1331 (FFWF…YGMM), 1341–1361 (IAGI…GFLI), 1366–1386 (IPIW…LYGI), and 1422–1442 (FLPV…FAFA).

The protein belongs to the ABC transporter superfamily. ABCG family. PDR (TC 3.A.1.205) subfamily. Expressed in roots at low levels.

It localises to the membrane. In terms of biological role, may be a general defense protein. The protein is ABC transporter G family member 34 (ABCG34) of Arabidopsis thaliana (Mouse-ear cress).